A 425-amino-acid chain; its full sequence is Serine--tRNA ligase (425 aa).

233-235 is a binding site for L-serine; that stretch reads TAE. 264–266 serves as a coordination point for ATP; sequence RRE. Glu287 provides a ligand contact to L-serine. ATP is bound at residue 351–354; the sequence is EVSS. Residue Ser386 coordinates L-serine.

Belongs to the class-II aminoacyl-tRNA synthetase family. Type-1 seryl-tRNA synthetase subfamily. In terms of assembly, homodimer. The tRNA molecule binds across the dimer.

It localises to the cytoplasm. It carries out the reaction tRNA(Ser) + L-serine + ATP = L-seryl-tRNA(Ser) + AMP + diphosphate + H(+). The catalysed reaction is tRNA(Sec) + L-serine + ATP = L-seryl-tRNA(Sec) + AMP + diphosphate + H(+). It functions in the pathway aminoacyl-tRNA biosynthesis; selenocysteinyl-tRNA(Sec) biosynthesis; L-seryl-tRNA(Sec) from L-serine and tRNA(Sec): step 1/1. Its function is as follows. Catalyzes the attachment of serine to tRNA(Ser). Is also able to aminoacylate tRNA(Sec) with serine, to form the misacylated tRNA L-seryl-tRNA(Sec), which will be further converted into selenocysteinyl-tRNA(Sec). The chain is Serine--tRNA ligase from Thermosipho melanesiensis (strain DSM 12029 / CIP 104789 / BI429).